Reading from the N-terminus, the 318-residue chain is MSDSNLSDNHLPDTFFLTGIPGLEAAHFWIAIPFCAMYLVALVGNAALILVIAMDNALHAPMYLFLCLLSLTDLALSSTTVPKMLAILWLHAGEISFGGCLAQMFCVHSIYALESSILLAMAFDRYVAICNPLRYTTILNHAVIGRIGFVGLFRSVAIVSPFIFLLRRLPYCGHRVMTHTYCEHMGIARLACANITVNIVYGLTVALLAMGLDSILIAISYGFILHAVFHLPSHDAQHKALSTCGSHIGIILVFYIPAFFSFLTHRFGHHEVPKHVHIFLANLYVLVPPVLNPILYGARTKEIRSRLLKLLHLGKTSI.

The Extracellular segment spans residues Met-1–Phe-28. A glycan (N-linked (GlcNAc...) asparagine) is linked at Asn-5. Residues Trp-29–Ile-49 traverse the membrane as a helical segment. Residues Leu-50 to Ala-57 lie on the Cytoplasmic side of the membrane. The helical transmembrane segment at Leu-58 to Ser-78 threads the bilayer. The Extracellular segment spans residues Thr-79–Ala-102. A disulfide bridge connects residues Cys-100 and Cys-192. Residues Gln-103–Phe-123 form a helical membrane-spanning segment. Over Asp-124–Ala-142 the chain is Cytoplasmic. Residues Val-143–Ile-163 traverse the membrane as a helical segment. Residues Phe-164 to Ile-199 are Extracellular-facing. The helical transmembrane segment at Val-200–Ser-220 threads the bilayer. Over Tyr-221–Ala-240 the chain is Cytoplasmic. A helical membrane pass occupies residues Leu-241–Ser-261. Topologically, residues Phe-262–His-277 are extracellular. A helical transmembrane segment spans residues Ile-278–Ala-298. Topologically, residues Arg-299 to Ile-318 are cytoplasmic.

It belongs to the G-protein coupled receptor 1 family.

It is found in the cell membrane. Functionally, odorant receptor. The protein is Olfactory receptor 52D1 (OR52D1) of Homo sapiens (Human).